We begin with the raw amino-acid sequence, 525 residues long: Cytochrome P450 CYP72A613 (525 aa).

A helical transmembrane segment spans residues 2–22; it reads VFLFPTGTIIIWVLTILLAVI. Residue Cys473 participates in heme binding.

The protein belongs to the cytochrome P450 family. In terms of tissue distribution, mainly expressed in leaves and seed pods and, to a lower extent, in flowers and stems.

Its subcellular location is the membrane. It participates in steroid metabolism; cholesterol metabolism. Functionally, involved in the biosynthesis of spiroketal steroid and saponin natural products from cholesterol such as diosgenin and analogs (e.g. furostanol and spirostanol), plant defense compounds used as main precursors for the industrial production of steroid hormones. During the 5,6-spiroketalization of cholesterol, may catalyze the 27-monohydroxylation of furostanol-type steroid to an intermediate product that undergoes a stereospecific formation of the terminal heterocycle to yield diosgenin. This is Cytochrome P450 CYP72A613 from Trigonella foenum-graecum (Fenugreek).